We begin with the raw amino-acid sequence, 78 residues long: MSRVCQVTGKSPITGNNVSHANNKTKRRFLPNLQTHRFWVENEKRFVKLRVSTKGMRIIDKVGIDKVLSDIRARGGKV.

The disordered stretch occupies residues 1–21 (MSRVCQVTGKSPITGNNVSHA). Positions 8 to 21 (TGKSPITGNNVSHA) are enriched in polar residues.

The protein belongs to the bacterial ribosomal protein bL28 family.

The polypeptide is Large ribosomal subunit protein bL28 (Hahella chejuensis (strain KCTC 2396)).